An 801-amino-acid polypeptide reads, in one-letter code: Phenylalanine--tRNA ligase beta subunit (801 aa).

Positions 39–153 constitute a tRNA-binding domain; it reads AEGLSKLVVG…DEAVPGDAIF (115 aa). In terms of domain architecture, B5 spans 406–481; the sequence is TEPVEVSTNL…RIYGYDKLPT (76 aa). Mg(2+) is bound by residues Asp-459, Asp-465, Glu-468, and Glu-469. Residues 708–801 form the FDX-ACB domain; the sequence is TKFPAMTRDI…LTEQVGAEVR (94 aa).

It belongs to the phenylalanyl-tRNA synthetase beta subunit family. Type 1 subfamily. Tetramer of two alpha and two beta subunits. It depends on Mg(2+) as a cofactor.

Its subcellular location is the cytoplasm. The enzyme catalyses tRNA(Phe) + L-phenylalanine + ATP = L-phenylalanyl-tRNA(Phe) + AMP + diphosphate + H(+). The protein is Phenylalanine--tRNA ligase beta subunit of Streptococcus pyogenes serotype M3 (strain SSI-1).